The primary structure comprises 370 residues: Histidinol-phosphate aminotransferase (370 aa).

Position 223 is an N6-(pyridoxal phosphate)lysine (Lys-223).

Belongs to the class-II pyridoxal-phosphate-dependent aminotransferase family. Histidinol-phosphate aminotransferase subfamily. Homodimer. Pyridoxal 5'-phosphate serves as cofactor.

It catalyses the reaction L-histidinol phosphate + 2-oxoglutarate = 3-(imidazol-4-yl)-2-oxopropyl phosphate + L-glutamate. The protein operates within amino-acid biosynthesis; L-histidine biosynthesis; L-histidine from 5-phospho-alpha-D-ribose 1-diphosphate: step 7/9. The chain is Histidinol-phosphate aminotransferase from Methylobacterium nodulans (strain LMG 21967 / CNCM I-2342 / ORS 2060).